Consider the following 684-residue polypeptide: Beta-mannosyltransferase 1 (684 aa).

Topologically, residues 1 to 28 are cytoplasmic; the sequence is MDKFIQSFSHQYLDSSSSLKLTARRKRK. The helical transmembrane segment at 29 to 49 threads the bilayer; it reads LTILGLFLFSLISLMIIISYS. Over 50–684 the chain is Extracellular; the sequence is NNNILPGLSG…KFCKIYGETF (635 aa). An N-linked (GlcNAc...) asparagine glycan is attached at Asn297.

This sequence belongs to the BMT family.

The protein localises to the membrane. Functionally, beta-mannosyltransferase involved in cell wall biosynthesis. Required for addition of the first beta-mannose residue to acid-stable fraction of cell wall phosphopeptidomannan. Plays a key role in reducing host inflammatory response. The protein is Beta-mannosyltransferase 1 (BMT1) of Candida albicans (strain SC5314 / ATCC MYA-2876) (Yeast).